A 193-amino-acid chain; its full sequence is Protein Syd (193 aa).

It belongs to the Syd family.

It localises to the cell inner membrane. In terms of biological role, interacts with the SecY protein in vivo. May bind preferentially to an uncomplexed state of SecY, thus functioning either as a chelating agent for excess SecY in the cell or as a regulatory factor that negatively controls the translocase function. The protein is Protein Syd of Tolumonas auensis (strain DSM 9187 / NBRC 110442 / TA 4).